A 265-amino-acid polypeptide reads, in one-letter code: Type 1 encapsulin shell protein (265 aa).

It belongs to the encapsulin family. Family 1 subfamily. In terms of assembly, found in a complex with DyP, suggesting it is the native cargo protein. Monomers form pentamers, which assemble to form hollow shells composed of 60 subunits with several openings.

It is found in the encapsulin nanocompartment. It localises to the cell membrane. Its function is as follows. Shell component of a type 1 encapsulin nanocompartment. Assembles into proteinaceous shells 23-24 nm in diameter with 2-2.5 nm thick walls. Cargo protein DyP is targeted to the interior via its C-terminal extension; probably only 1 DyP hexamer is incorporated into each shell. Probably involved in protection against oxidative damage. This is Type 1 encapsulin shell protein from Mycolicibacterium paratuberculosis (strain ATCC BAA-968 / K-10) (Mycobacterium paratuberculosis).